A 348-amino-acid polypeptide reads, in one-letter code: Sulfate/thiosulfate import ATP-binding protein CysA (348 aa).

The ABC transporter domain occupies 3–237 (IRIQELRKQF…PSSPFVYSFV (235 aa)). 35–42 (GPSGSGKT) contributes to the ATP binding site.

This sequence belongs to the ABC transporter superfamily. Sulfate/tungstate importer (TC 3.A.1.6) family. As to quaternary structure, the complex is composed of two ATP-binding proteins (CysA), two transmembrane proteins (CysT and CysW) and a solute-binding protein (CysP).

It is found in the cell inner membrane. It carries out the reaction sulfate(out) + ATP + H2O = sulfate(in) + ADP + phosphate + H(+). The catalysed reaction is thiosulfate(out) + ATP + H2O = thiosulfate(in) + ADP + phosphate + H(+). In terms of biological role, part of the ABC transporter complex CysAWTP involved in sulfate/thiosulfate import. Responsible for energy coupling to the transport system. The polypeptide is Sulfate/thiosulfate import ATP-binding protein CysA (Xylella fastidiosa (strain Temecula1 / ATCC 700964)).